A 57-amino-acid polypeptide reads, in one-letter code: Zinc finger protein MJ0458.1 (57 aa).

4 short sequence motifs (c(P)XCG motif) span residues 8-12, 26-30, 37-41, and 49-53; these read CISCN, CPNCG, CERCR, and CPKCG. The Zn(2+) site is built by C26 and C29. Zn(2+)-binding residues include C49 and C52.

In terms of assembly, monomer in solution.

Zinc-binding protein that binds only one zinc ion. This Methanocaldococcus jannaschii (strain ATCC 43067 / DSM 2661 / JAL-1 / JCM 10045 / NBRC 100440) (Methanococcus jannaschii) protein is Zinc finger protein MJ0458.1.